The chain runs to 587 residues: Potassium-transporting ATPase potassium-binding subunit (587 aa).

Transmembrane regions (helical) follow at residues 1 to 21 (MSTS…LWVT), 60 to 80 (PVYA…LYLL), 89 to 109 (LNLG…VSFM), and 131 to 151 (GLAV…IAVV). Residues 162–188 (AVGGPGGPNGPGGPGGPNGPGAGSRDD) are disordered. A compositionally biased stretch (gly residues) spans 164–183 (GGPGGPNGPGGPGGPNGPGA). 7 helical membrane passes run 208-228 (IRIL…GGAI), 280-300 (PTSW…FSLP), 314-334 (LAIV…NAAF), 409-429 (GLYG…LMIG), 449-469 (LYFL…MGLP), 514-534 (ALGL…LGMA), and 557-577 (FAGM…FPAL).

It belongs to the KdpA family. The system is composed of three essential subunits: KdpA, KdpB and KdpC.

Its subcellular location is the cell membrane. Functionally, part of the high-affinity ATP-driven potassium transport (or Kdp) system, which catalyzes the hydrolysis of ATP coupled with the electrogenic transport of potassium into the cytoplasm. This subunit binds the extracellular potassium ions and delivers the ions to the membrane domain of KdpB through an intramembrane tunnel. This chain is Potassium-transporting ATPase potassium-binding subunit, found in Frankia alni (strain DSM 45986 / CECT 9034 / ACN14a).